The following is a 57-amino-acid chain: Large ribosomal subunit protein bL32 (57 aa).

Positions 1 to 23 are disordered; the sequence is MAVPARHTSSAKKNRRRTHYKLT. Residues 9 to 20 show a composition bias toward basic residues; that stretch reads SSAKKNRRRTHY.

The protein belongs to the bacterial ribosomal protein bL32 family.

This chain is Large ribosomal subunit protein bL32, found in Lactococcus lactis subsp. cremoris (strain MG1363).